The following is a 133-amino-acid chain: p53 and DNA damage-regulated protein 1 (133 aa).

Belongs to the prefoldin subunit beta family. As to quaternary structure, component of the PAQosome complex which is responsible for the biogenesis of several protein complexes and which consists of R2TP complex members RUVBL1, RUVBL2, RPAP3 and PIH1D1, URI complex members PFDN2, PFDN6, PDRG1, UXT and URI1 as well as ASDURF, POLR2E and DNAAF10/WDR92.

The protein localises to the cytoplasm. May play a role in chaperone-mediated protein folding. This Pongo abelii (Sumatran orangutan) protein is p53 and DNA damage-regulated protein 1 (PDRG1).